Here is a 276-residue protein sequence, read N- to C-terminus: Large ribosomal subunit protein uL2 (276 aa).

The interval 221–276 is disordered; it reads RGSAMNPNDHPHGGGEGRAPIGRKSPMTPWGKKARGVKTRDRKKASNALIIRRRTK. Basic residues predominate over residues 252–276; that stretch reads KKARGVKTRDRKKASNALIIRRRTK.

It belongs to the universal ribosomal protein uL2 family. In terms of assembly, part of the 50S ribosomal subunit. Forms a bridge to the 30S subunit in the 70S ribosome.

In terms of biological role, one of the primary rRNA binding proteins. Required for association of the 30S and 50S subunits to form the 70S ribosome, for tRNA binding and peptide bond formation. It has been suggested to have peptidyltransferase activity; this is somewhat controversial. Makes several contacts with the 16S rRNA in the 70S ribosome. This chain is Large ribosomal subunit protein uL2, found in Onion yellows phytoplasma (strain OY-M).